We begin with the raw amino-acid sequence, 241 residues long: LTAKLSYPIYDDLDIYTRLGGMVWRADAKNNVGGGDRSNHDTGVSPVFAGGVEYAWTPSIATRLEYQWINNIGDAGTVGTRPDNGMLSVGVSYRFGQDEAAPVVAPAPAPAPQVQTKHFTLKSDVLFNFNKSTLKPEGQQALDQLYTQLSNLDPKDGAVVVLGYTDRIGSDAYNQRLSQQRAQSVVDYLVSKGIPAGKITAQGQGESNPVTGSTCDNVKQRAALIDCLAPDRRVEIEVKGV.

A run of 5 beta stranded transmembrane segments spans residues 1–8, 13–21, 46–55, 60–67, and 86–94; these read LTAKLSYP, LDIYTRLGG, PVFAGGVEYA, IATRLEYQ, and MLSVGVSYR. Repeat copies occupy residues 105 to 106, 107 to 108, 109 to 110, and 111 to 112. Residues 105 to 112 form a 4 X 2 AA tandem repeats of A-P region; it reads APAPAPAP. One can recognise an OmpA-like domain in the interval 114–241; that stretch reads VQTKHFTLKS…RRVEIEVKGV (128 aa). Cys215 and Cys227 are oxidised to a cystine.

The protein belongs to the outer membrane OOP (TC 1.B.6) superfamily. OmpA family. In terms of assembly, monomer and homodimer.

The protein resides in the cell outer membrane. Functionally, with TolR probably plays a role in maintaining the position of the peptidoglycan cell wall in the periplasm. Acts as a porin with low permeability that allows slow penetration of small solutes; an internal gate slows down solute passage. This chain is Outer membrane protein A, found in Shimwellia blattae (Escherichia blattae).